We begin with the raw amino-acid sequence, 560 residues long: Dihydroxy-acid dehydratase (560 aa).

Residue aspartate 80 participates in Mg(2+) binding. Cysteine 121 provides a ligand contact to [2Fe-2S] cluster. Mg(2+)-binding residues include aspartate 122 and lysine 123. Lysine 123 is subject to N6-carboxylysine. Position 194 (cysteine 194) interacts with [2Fe-2S] cluster. Residue glutamate 447 participates in Mg(2+) binding. Residue serine 473 is the Proton acceptor of the active site.

Belongs to the IlvD/Edd family. Homodimer. It depends on [2Fe-2S] cluster as a cofactor. Mg(2+) serves as cofactor.

It catalyses the reaction (2R)-2,3-dihydroxy-3-methylbutanoate = 3-methyl-2-oxobutanoate + H2O. The enzyme catalyses (2R,3R)-2,3-dihydroxy-3-methylpentanoate = (S)-3-methyl-2-oxopentanoate + H2O. The protein operates within amino-acid biosynthesis; L-isoleucine biosynthesis; L-isoleucine from 2-oxobutanoate: step 3/4. It functions in the pathway amino-acid biosynthesis; L-valine biosynthesis; L-valine from pyruvate: step 3/4. Functions in the biosynthesis of branched-chain amino acids. Catalyzes the dehydration of (2R,3R)-2,3-dihydroxy-3-methylpentanoate (2,3-dihydroxy-3-methylvalerate) into 2-oxo-3-methylpentanoate (2-oxo-3-methylvalerate) and of (2R)-2,3-dihydroxy-3-methylbutanoate (2,3-dihydroxyisovalerate) into 2-oxo-3-methylbutanoate (2-oxoisovalerate), the penultimate precursor to L-isoleucine and L-valine, respectively. The protein is Dihydroxy-acid dehydratase of Chlorobaculum parvum (strain DSM 263 / NCIMB 8327) (Chlorobium vibrioforme subsp. thiosulfatophilum).